The primary structure comprises 477 residues: Glycogen synthase (477 aa).

Lys-15 contacts ADP-alpha-D-glucose.

This sequence belongs to the glycosyltransferase 1 family. Bacterial/plant glycogen synthase subfamily.

The catalysed reaction is [(1-&gt;4)-alpha-D-glucosyl](n) + ADP-alpha-D-glucose = [(1-&gt;4)-alpha-D-glucosyl](n+1) + ADP + H(+). The protein operates within glycan biosynthesis; glycogen biosynthesis. Synthesizes alpha-1,4-glucan chains using ADP-glucose. The sequence is that of Glycogen synthase from Salmonella arizonae (strain ATCC BAA-731 / CDC346-86 / RSK2980).